The primary structure comprises 181 residues: MFKDEMRQTPNKPLPIAVVGEAILKQQAIEVRDFDDTLSQLASQMAASMVEAKGVGIAAPQVHSPLALFIMASRPNERYPDAPLMEPLVVVNPQIVLRSLQLEKGEEGCLSVPGQRFTIWRPQTIVVRYQNLAGQWQHSELTGFIARIFQHEFDHLQGITLLERSQMPEQKLMAQEGKPQA.

Positions 109 and 151 each coordinate Fe cation. The active site involves Glu-152. Fe cation is bound at residue His-155.

It belongs to the polypeptide deformylase family. Requires Fe(2+) as cofactor.

The catalysed reaction is N-terminal N-formyl-L-methionyl-[peptide] + H2O = N-terminal L-methionyl-[peptide] + formate. In terms of biological role, removes the formyl group from the N-terminal Met of newly synthesized proteins. Requires at least a dipeptide for an efficient rate of reaction. N-terminal L-methionine is a prerequisite for activity but the enzyme has broad specificity at other positions. The sequence is that of Peptide deformylase 2 from Shewanella oneidensis (strain ATCC 700550 / JCM 31522 / CIP 106686 / LMG 19005 / NCIMB 14063 / MR-1).